The following is a 417-amino-acid chain: Gamma-glutamyl phosphate reductase (417 aa).

Belongs to the gamma-glutamyl phosphate reductase family.

The protein localises to the cytoplasm. It catalyses the reaction L-glutamate 5-semialdehyde + phosphate + NADP(+) = L-glutamyl 5-phosphate + NADPH + H(+). Its pathway is amino-acid biosynthesis; L-proline biosynthesis; L-glutamate 5-semialdehyde from L-glutamate: step 2/2. Functionally, catalyzes the NADPH-dependent reduction of L-glutamate 5-phosphate into L-glutamate 5-semialdehyde and phosphate. The product spontaneously undergoes cyclization to form 1-pyrroline-5-carboxylate. This Escherichia coli O8 (strain IAI1) protein is Gamma-glutamyl phosphate reductase.